The chain runs to 384 residues: GTPase Obg (384 aa).

The Obg domain occupies 1-159; the sequence is MKFIDEAKIE…RSLQLELKVL (159 aa). Positions 20–46 are disordered; it reads ATSFRREKFVPRGGPDGGDGGKGGSVW. The span at 33-43 shows a compositional bias: gly residues; sequence GPDGGDGGKGG. The OBG-type G domain occupies 160-348; it reads ADVGLLGMPN…LVHQINQYLT (189 aa). GTP contacts are provided by residues 166-173, 191-195, 213-216, 284-287, and 329-331; these read GMPNAGKS, FTTLH, DIPG, NKLD, and SAL. Residues serine 173 and threonine 193 each coordinate Mg(2+).

It belongs to the TRAFAC class OBG-HflX-like GTPase superfamily. OBG GTPase family. In terms of assembly, monomer. Mg(2+) is required as a cofactor.

It localises to the cytoplasm. Its function is as follows. An essential GTPase which binds GTP, GDP and possibly (p)ppGpp with moderate affinity, with high nucleotide exchange rates and a fairly low GTP hydrolysis rate. Plays a role in control of the cell cycle, stress response, ribosome biogenesis and in those bacteria that undergo differentiation, in morphogenesis control. This chain is GTPase Obg, found in Neisseria meningitidis serogroup C / serotype 2a (strain ATCC 700532 / DSM 15464 / FAM18).